The sequence spans 363 residues: Histidinol-phosphate aminotransferase (363 aa).

Lys-218 carries the post-translational modification N6-(pyridoxal phosphate)lysine.

It belongs to the class-II pyridoxal-phosphate-dependent aminotransferase family. Histidinol-phosphate aminotransferase subfamily. As to quaternary structure, homodimer. Pyridoxal 5'-phosphate is required as a cofactor.

The catalysed reaction is L-histidinol phosphate + 2-oxoglutarate = 3-(imidazol-4-yl)-2-oxopropyl phosphate + L-glutamate. It functions in the pathway amino-acid biosynthesis; L-histidine biosynthesis; L-histidine from 5-phospho-alpha-D-ribose 1-diphosphate: step 7/9. The chain is Histidinol-phosphate aminotransferase from Xanthomonas euvesicatoria pv. vesicatoria (strain 85-10) (Xanthomonas campestris pv. vesicatoria).